Here is a 161-residue protein sequence, read N- to C-terminus: Phosphopantetheine adenylyltransferase (161 aa).

Thr10 lines the substrate pocket. ATP contacts are provided by residues 10 to 11 (TF) and His18. The substrate site is built by Lys42, Leu74, and Arg88. Residues 89–91 (GLR), Glu99, and 124–130 (NSFISST) contribute to the ATP site.

Belongs to the bacterial CoaD family. As to quaternary structure, homohexamer. Requires Mg(2+) as cofactor.

It localises to the cytoplasm. It carries out the reaction (R)-4'-phosphopantetheine + ATP + H(+) = 3'-dephospho-CoA + diphosphate. It functions in the pathway cofactor biosynthesis; coenzyme A biosynthesis; CoA from (R)-pantothenate: step 4/5. In terms of biological role, reversibly transfers an adenylyl group from ATP to 4'-phosphopantetheine, yielding dephospho-CoA (dPCoA) and pyrophosphate. The chain is Phosphopantetheine adenylyltransferase from Photobacterium profundum (strain SS9).